The following is a 245-amino-acid chain: 2,3-bisphosphoglycerate-dependent phosphoglycerate mutase (245 aa).

Substrate contacts are provided by residues 8 to 15, 21 to 22, arginine 60, 87 to 90, lysine 98, 114 to 115, and 183 to 184; these read RHGQSLWN, TG, ERHY, RR, and GN. Catalysis depends on histidine 9, which acts as the Tele-phosphohistidine intermediate. The active-site Proton donor/acceptor is the glutamate 87.

The protein belongs to the phosphoglycerate mutase family. BPG-dependent PGAM subfamily.

The catalysed reaction is (2R)-2-phosphoglycerate = (2R)-3-phosphoglycerate. Its pathway is carbohydrate degradation; glycolysis; pyruvate from D-glyceraldehyde 3-phosphate: step 3/5. Its function is as follows. Catalyzes the interconversion of 2-phosphoglycerate and 3-phosphoglycerate. This chain is 2,3-bisphosphoglycerate-dependent phosphoglycerate mutase, found in Bacillus cereus (strain B4264).